A 476-amino-acid polypeptide reads, in one-letter code: Protein transport protein Sec61 subunit alpha isoform 2 (476 aa).

Over 1–32 (MGIKFLEVIKPFCAVLPEIQKPERKIQFREKV) the chain is Cytoplasmic. A helical membrane pass occupies residues 33–53 (LWTAITLFIFLVCCQIPLFGI). Residues 54 to 75 (MSSDSADPFYWMRVILASNRGT) lie on the Lumenal side of the membrane. Residues 76-96 (LMELGISPIVTSGLIMQLLAG) traverse the membrane as a helical segment. At 97 to 117 (AKIIEVGDTPKDRALFNGAQK) the chain is on the cytoplasmic side. A helical membrane pass occupies residues 118–138 (LFGMIITIGQAIVYVMTGMYG). Over 139–144 (DPAEMG) the chain is Lumenal. A helical transmembrane segment spans residues 145 to 165 (AGICLLIIIQLFVAGLIVLLL). Over 166-172 (DELLQKG) the chain is Cytoplasmic. A helical transmembrane segment spans residues 173-193 (YGLGSGISLFIATNICETIVW). Residues 194 to 240 (KASSPTTINTGRGTEFEGAVIALFHLLATRTDKVRALREAFYRQNLP) lie on the Lumenal side of the membrane. The chain crosses the membrane as a helical span at residues 241 to 261 (NLMNLIATVFVFAVVIYFQGF). Over 262–288 (RVDLPIKSARYRGQYSSYPIKLFYTSN) the chain is Cytoplasmic. A helical membrane pass occupies residues 289 to 309 (IPIILQSALVSNLYVISQMLS). The Lumenal portion of the chain corresponds to 310 to 353 (VRFSGNFLVNLLGQWADVSGGGPARSYPVGGLCYYLSPPESMGA). A helical membrane pass occupies residues 354 to 374 (ILEDPVHVVVYIIFMLGSCAF). Over 375–420 (FSKTWIEVSGSSAKDVAKQLKEQQMVMRGHRDTSMVHELNRYIPTA) the chain is Cytoplasmic. Transmembrane regions (helical) follow at residues 421–441 (AAFG…LGAI) and 442–462 (GSGT…EIFV). At 463–476 (KEQAEVGGMGALFF) the chain is on the cytoplasmic side.

Belongs to the SecY/SEC61-alpha family. The SEC61 channel-forming translocon complex consists of channel-forming core components SEC61A1, SEC61B and SEC61G and different auxiliary components such as SEC62 and SEC63.

It localises to the endoplasmic reticulum membrane. Component of SEC61 channel-forming translocon complex that mediates transport of signal peptide-containing precursor polypeptides across the endoplasmic reticulum (ER). Forms a ribosome receptor and a gated pore in the ER membrane, both functions required for cotranslational translocation of nascent polypeptides. In Pongo abelii (Sumatran orangutan), this protein is Protein transport protein Sec61 subunit alpha isoform 2 (SEC61A2).